The sequence spans 462 residues: MFILSSSSSTLPSAPPFSSTTSIFLSFSRVSLPPSSSSLKLLPLSLQFGPPKLASSCSLRFSASRAMAELIQDKESAQSAATAAAASSGYERRNEPAHSRKFLDVRSEEELLSCIKKETEAGKLPPNVAAGMEELYQNYRNAVIESGNPKADEIVLSNMTVALDRILLDVEDPFVFSSHHKAIREPFDYYIFGQNYIRPLIDFGNSFVGNLSLFKDIEEKLQQGHNVVLISNHQTEADPAIISLLLEKTNPYIAENTIFVAGDRVLADPLCKPFSIGRNLICVYSKKHMFDIPELTETKRKANTRSLKEMALLLRGGSQLIWIAPSGGRDRPDPSTGEWYPAPFDASSVDNMRRLIQHSDVPGHLFPLALLCHDIMPPPSQVEIEIGEKRVIAFNGAGLSVAPEISFEEIAATHKNPEEVREAYSKALFDSVAMQYNVLKTAISGKQGLGASTADVSLSQPW.

The transit peptide at 1–82 (MFILSSSSST…DKESAQSAAT (82 aa)) directs the protein to the chloroplast. The short motif at 233–238 (HQTEAD) is the HXXXXD motif element.

This sequence belongs to the GPAT/DAPAT family.

It is found in the plastid. The protein localises to the chloroplast stroma. It carries out the reaction a fatty acyl-[ACP] + sn-glycerol 3-phosphate = a 1-acyl-sn-glycero-3-phosphate + holo-[ACP]. It catalyses the reaction sn-glycerol 3-phosphate + an acyl-CoA = a 1-acyl-sn-glycero-3-phosphate + CoA. The protein operates within phospholipid metabolism; CDP-diacylglycerol biosynthesis; CDP-diacylglycerol from sn-glycerol 3-phosphate: step 1/3. In terms of biological role, esterifies the acyl-group from acyl-acyl carrier proteins (acyl-ACPs) to the sn-1 position of glycerol-3-phosphate. The physiological acyl donors in chloroplasts are acyl-ACPs, but acyl-CoAs are used as artificial donor for in vitro reactions. The enzyme from chilling-resistant plants discriminates against non-fluid palmitic acid and selects oleic acid whereas the enzyme from sensitive plants accepts both fatty acids. Squash is chilling-sensitive. Does not seem to discriminate between the acyl-ACP thioesters 18:1-ACP, 18:0-ACP and 16:0-ACP. Exhibits higher selectivity for 16:0-CoA than 18:1-CoA in vitro. This Cucurbita moschata (Winter crookneck squash) protein is Glycerol-3-phosphate acyltransferase ATS12, chloroplastic.